A 215-amino-acid polypeptide reads, in one-letter code: UPF0502 protein YceH (215 aa).

This sequence belongs to the UPF0502 family.

This chain is UPF0502 protein YceH, found in Salmonella paratyphi C (strain RKS4594).